The primary structure comprises 266 residues: 4-hydroxy-tetrahydrodipicolinate reductase (266 aa).

NAD(+) is bound at residue 10 to 15 (GPRGRM). Residue Lys38 coordinates NADP(+). Residues 99 to 101 (GTT) and 125 to 128 (APNF) each bind NAD(+). His155 serves as the catalytic Proton donor/acceptor. Residue His156 participates in (S)-2,3,4,5-tetrahydrodipicolinate binding. Lys159 functions as the Proton donor in the catalytic mechanism. A (S)-2,3,4,5-tetrahydrodipicolinate-binding site is contributed by 165–166 (GT).

The protein belongs to the DapB family.

It is found in the cytoplasm. The enzyme catalyses (S)-2,3,4,5-tetrahydrodipicolinate + NAD(+) + H2O = (2S,4S)-4-hydroxy-2,3,4,5-tetrahydrodipicolinate + NADH + H(+). It carries out the reaction (S)-2,3,4,5-tetrahydrodipicolinate + NADP(+) + H2O = (2S,4S)-4-hydroxy-2,3,4,5-tetrahydrodipicolinate + NADPH + H(+). It participates in amino-acid biosynthesis; L-lysine biosynthesis via DAP pathway; (S)-tetrahydrodipicolinate from L-aspartate: step 4/4. Functionally, catalyzes the conversion of 4-hydroxy-tetrahydrodipicolinate (HTPA) to tetrahydrodipicolinate. This Bacillus thuringiensis subsp. konkukian (strain 97-27) protein is 4-hydroxy-tetrahydrodipicolinate reductase.